The following is a 277-amino-acid chain: 4-diphosphocytidyl-2-C-methyl-D-erythritol kinase (277 aa).

K9 is an active-site residue. An ATP-binding site is contributed by 91–101; that stretch reads PMGAGLGGGSS. D133 is a catalytic residue.

Belongs to the GHMP kinase family. IspE subfamily.

It carries out the reaction 4-CDP-2-C-methyl-D-erythritol + ATP = 4-CDP-2-C-methyl-D-erythritol 2-phosphate + ADP + H(+). Its pathway is isoprenoid biosynthesis; isopentenyl diphosphate biosynthesis via DXP pathway; isopentenyl diphosphate from 1-deoxy-D-xylulose 5-phosphate: step 3/6. In terms of biological role, catalyzes the phosphorylation of the position 2 hydroxy group of 4-diphosphocytidyl-2C-methyl-D-erythritol. This chain is 4-diphosphocytidyl-2-C-methyl-D-erythritol kinase, found in Acinetobacter baumannii (strain AB307-0294).